The primary structure comprises 199 residues: 7-methyl-GTP pyrophosphatase (199 aa).

Catalysis depends on Asp76, which acts as the Proton acceptor.

Belongs to the Maf family. YceF subfamily. It depends on a divalent metal cation as a cofactor.

It localises to the cytoplasm. The enzyme catalyses N(7)-methyl-GTP + H2O = N(7)-methyl-GMP + diphosphate + H(+). Functionally, nucleoside triphosphate pyrophosphatase that hydrolyzes 7-methyl-GTP (m(7)GTP). May have a dual role in cell division arrest and in preventing the incorporation of modified nucleotides into cellular nucleic acids. This Hahella chejuensis (strain KCTC 2396) protein is 7-methyl-GTP pyrophosphatase.